Here is a 453-residue protein sequence, read N- to C-terminus: Bifunctional protein GlmU (453 aa).

The tract at residues 1–228 (MPHWAAVIMA…VHEALGINSR (228 aa)) is pyrophosphorylase. UDP-N-acetyl-alpha-D-glucosamine-binding positions include lysine 23, glutamine 73, 78–79 (GT), 100–102 (SGD), glycine 139, glutamate 153, asparagine 168, and asparagine 226. Aspartate 102 is a Mg(2+) binding site. Residue asparagine 226 coordinates Mg(2+). Residues 229-249 (AQLAAAEDVARQRILSYWMEE) form a linker region. Residues 250–453 (GVTIIDPRST…IENWVRNKKK (204 aa)) form an N-acetyltransferase region. UDP-N-acetyl-alpha-D-glucosamine is bound by residues arginine 331 and lysine 349. Histidine 361 serves as the catalytic Proton acceptor. Residues tyrosine 364 and asparagine 375 each contribute to the UDP-N-acetyl-alpha-D-glucosamine site. Residues alanine 378, 384–385 (NY), serine 403, alanine 421, and arginine 438 each bind acetyl-CoA.

It in the N-terminal section; belongs to the N-acetylglucosamine-1-phosphate uridyltransferase family. In the C-terminal section; belongs to the transferase hexapeptide repeat family. In terms of assembly, homotrimer. Mg(2+) is required as a cofactor.

The protein localises to the cytoplasm. It carries out the reaction alpha-D-glucosamine 1-phosphate + acetyl-CoA = N-acetyl-alpha-D-glucosamine 1-phosphate + CoA + H(+). The enzyme catalyses N-acetyl-alpha-D-glucosamine 1-phosphate + UTP + H(+) = UDP-N-acetyl-alpha-D-glucosamine + diphosphate. The protein operates within nucleotide-sugar biosynthesis; UDP-N-acetyl-alpha-D-glucosamine biosynthesis; N-acetyl-alpha-D-glucosamine 1-phosphate from alpha-D-glucosamine 6-phosphate (route II): step 2/2. Its pathway is nucleotide-sugar biosynthesis; UDP-N-acetyl-alpha-D-glucosamine biosynthesis; UDP-N-acetyl-alpha-D-glucosamine from N-acetyl-alpha-D-glucosamine 1-phosphate: step 1/1. It functions in the pathway bacterial outer membrane biogenesis; LPS lipid A biosynthesis. Functionally, catalyzes the last two sequential reactions in the de novo biosynthetic pathway for UDP-N-acetylglucosamine (UDP-GlcNAc). The C-terminal domain catalyzes the transfer of acetyl group from acetyl coenzyme A to glucosamine-1-phosphate (GlcN-1-P) to produce N-acetylglucosamine-1-phosphate (GlcNAc-1-P), which is converted into UDP-GlcNAc by the transfer of uridine 5-monophosphate (from uridine 5-triphosphate), a reaction catalyzed by the N-terminal domain. The chain is Bifunctional protein GlmU from Desulfitobacterium hafniense (strain DSM 10664 / DCB-2).